The chain runs to 752 residues: Cytosolic phospholipase A2 (752 aa).

The phospholipid binding stretch occupies residues 1–178; the sequence is MSFIDPYQHI…MKKLLGPKKS (178 aa). Ser2 is modified (phosphoserine). One can recognise a C2 domain in the interval 6 to 122; that stretch reads PYQHIIVEHQ…KVGEKKEVPF (117 aa). Asp40, Thr41, Asp43, Asn65, Asp93, Ala94, and Asn95 together coordinate Ca(2+). One can recognise a PLA2c domain in the interval 140–740; sequence SCPDLRFSMA…SNVEARKFFN (601 aa). The active-site Nucleophile is Ser228. Residue Thr268 is modified to Phosphothreonine. A disordered region spans residues 427-457; sequence KHIVSNDSSDSDDEAQGPKGTENEDAEREYQ. A phosphoserine mark is found at Ser434, Ser435, and Ser437. Phosphoserine; by MAPK is present on Ser505. Residues Ser511 and Ser515 each carry the phosphoserine modification. Residue Lys541 forms a Glycyl lysine isopeptide (Lys-Gly) (interchain with G-Cter in SUMO2) linkage. Catalysis depends on Asp549, which acts as the Proton acceptor. A Glycyl lysine isopeptide (Lys-Gly) (interchain with G-Cter in SUMO2) cross-link involves residue Lys606. A phosphoserine mark is found at Ser727 and Ser729.

In terms of assembly, interacts with KAT5. In terms of processing, phosphorylated at both Ser-505 and Ser-727 in response to mitogenic stimuli. As to expression, in brain tissue, expressed in low levels in olfactory mitral and granule cells, in hippocampal pyramidal cells and in dentate and cerebellar granule cells.

It localises to the cytoplasm. The protein resides in the golgi apparatus membrane. Its subcellular location is the nucleus envelope. It carries out the reaction a 1,2-diacyl-sn-glycero-3-phosphocholine + H2O = a 1-acyl-sn-glycero-3-phosphocholine + a fatty acid + H(+). The catalysed reaction is a 1-O-alkyl-2-acyl-sn-glycero-3-phosphocholine + H2O = a 1-O-alkyl-sn-glycero-3-phosphocholine + a fatty acid + H(+). It catalyses the reaction a 1-acyl-sn-glycero-3-phosphocholine + H2O = sn-glycerol 3-phosphocholine + a fatty acid + H(+). The enzyme catalyses 1-hexadecanoyl-2-(5Z,8Z,11Z,14Z-eicosatetraenoyl)-sn-glycero-3-phosphocholine + H2O = 1-hexadecanoyl-sn-glycero-3-phosphocholine + (5Z,8Z,11Z,14Z)-eicosatetraenoate + H(+). It carries out the reaction 1,2-di-(5Z,8Z,11Z,14Z-eicosatetraenoyl)-sn-glycero-3-phosphocholine + H2O = 1-(5Z,8Z,11Z,14Z-eicosatetraenoyl)-sn-glycero-3-phosphocholine + (5Z,8Z,11Z,14Z)-eicosatetraenoate + H(+). The catalysed reaction is 1-octadecanoyl-2-(5Z,8Z,11Z,14Z-eicosatetraenoyl)-sn-glycero-3-phosphocholine + H2O = 1-octadecanoyl-sn-glycero-3-phosphocholine + (5Z,8Z,11Z,14Z)-eicosatetraenoate + H(+). It catalyses the reaction 1-hexadecanoyl-2-(9Z,12Z-octadecadienoyl)-sn-glycero-3-phosphocholine + H2O = (9Z,12Z)-octadecadienoate + 1-hexadecanoyl-sn-glycero-3-phosphocholine + H(+). The enzyme catalyses 1-octadecanoyl-2-(9Z,12Z,15Z-octadecatrienoyl)-sn-glycero-3-phosphocholine + H2O = (9Z,12Z,15Z)-octadecatrienoate + 1-octadecanoyl-sn-glycero-3-phosphocholine + H(+). It carries out the reaction 1-(5Z,8Z,11Z,14Z-eicosatetraenoyl)-2-hexadecanoyl-sn-glycero-3-phosphocholine + H2O = 1-(5Z,8Z,11Z,14Z-eicosatetraenoyl)-sn-glycero-3-phosphocholine + hexadecanoate + H(+). The catalysed reaction is 1-O-hexadecyl-2-(5Z,8Z,11Z,14Z)-eicosatetraenoyl-sn-glycero-3-phosphocholine + H2O = 1-O-hexadecyl-sn-glycero-3-phosphocholine + (5Z,8Z,11Z,14Z)-eicosatetraenoate + H(+). It catalyses the reaction 1,2-di-(9Z-octadecenoyl)-sn-glycero-3-phospho-(1'-sn-glycerol) + H2O = 1-(9Z-octadecenoyl)-sn-glycero-3-phospho-(1'-sn-glycerol) + (9Z)-octadecenoate + H(+). The enzyme catalyses 1-octadecanoyl-2-(5Z,8Z,11Z,14Z-eicosatetraenoyl)-sn-glycero-3-phosphate + H2O = 1-octadecanoyl-sn-glycero-3-phosphate + (5Z,8Z,11Z,14Z)-eicosatetraenoate + H(+). It carries out the reaction 1-hexadecanoyl-sn-glycero-3-phosphocholine + H2O = sn-glycerol 3-phosphocholine + hexadecanoate + H(+). The catalysed reaction is 2-(prostaglandin E2)-sn-glycero-3-phosphoethanolamine + H2O = sn-glycero-3-phosphoethanolamine + prostaglandin E2 + H(+). It catalyses the reaction 2-[(15S)-hydroxy-(5Z,8Z,11Z,13E)-eicosatetraenoyl]-sn-glycero-3-phosphocholine + H2O = (15S)-hydroxy-(5Z,8Z,11Z,13E)-eicosatetraenoate + sn-glycerol 3-phosphocholine + H(+). The enzyme catalyses 2-[(15R)-hydroxy-(5Z,8Z,11Z,13E)-eicosatetraenoyl]-sn-glycero-3-phosphocholine + H2O = (15R)-hydroxy-(5Z,8Z,11Z,13E)-eicosatetraenoate + sn-glycerol 3-phosphocholine + H(+). It carries out the reaction 2-(prostaglandin E2)-sn-glycero-3-phosphocholine + H2O = prostaglandin E2 + sn-glycerol 3-phosphocholine + H(+). The catalysed reaction is 2-[(11R)-hydroxy-(5Z,8Z,12E,14Z)-eicosatetraenoyl]-sn-glycero-3-phosphocholine + H2O = (11R)-hydroxy-(5Z,8Z,12E,14Z)-eicosatetraenoate + sn-glycerol 3-phosphocholine + H(+). It catalyses the reaction 1-(5Z,8Z,11Z,14Z-eicosatetraenoyl)-2-O-hexadecyl-sn-glycero-3-phosphocholine + H2O = 2-O-hexadecyl-sn-glycero-3-phosphocholine + (5Z,8Z,11Z,14Z)-eicosatetraenoate + H(+). The enzyme catalyses 1-octadecanoyl-2-(5Z,8Z,11Z,14Z-eicosatetraenoyl)-sn-glycero-3-phosphocholine + glycerol = 1-(5Z,8Z,11Z,14Z-eicosatetraenoyl)-glycerol + 1-octadecanoyl-sn-glycero-3-phosphocholine. It carries out the reaction 1-octadecanoyl-2-(9Z,12Z,15Z-octadecatrienoyl)-sn-glycero-3-phosphocholine + glycerol = 1-(9Z,12Z,15Z-octadecatrienoyl)-glycerol + 1-octadecanoyl-sn-glycero-3-phosphocholine. It functions in the pathway lipid metabolism; arachidonate metabolism. It participates in membrane lipid metabolism; glycerophospholipid metabolism. Its pathway is lipid metabolism; prostaglandin biosynthesis. The protein operates within lipid metabolism; leukotriene B4 biosynthesis. Its activity is regulated as follows. Activated by cytosolic calcium, which is necessary for binding to membrane lipids. Activated by phosphorylation in response to mitogenic stimuli. Its function is as follows. Has primarily calcium-dependent phospholipase and lysophospholipase activities, with a major role in membrane lipid remodeling and biosynthesis of lipid mediators of the inflammatory response. Plays an important role in embryo implantation and parturition through its ability to trigger prostanoid production. Preferentially hydrolyzes the ester bond of the fatty acyl group attached at sn-2 position of phospholipids (phospholipase A2 activity). Selectively hydrolyzes sn-2 arachidonoyl group from membrane phospholipids, providing the precursor for eicosanoid biosynthesis via the cyclooxygenase pathway. In an alternative pathway of eicosanoid biosynthesis, hydrolyzes sn-2 fatty acyl chain of eicosanoid lysophopholipids to release free bioactive eicosanoids. Hydrolyzes the ester bond of the fatty acyl group attached at sn-1 position of phospholipids (phospholipase A1 activity) only if an ether linkage rather than an ester linkage is present at the sn-2 position. This hydrolysis is not stereospecific. Has calcium-independent phospholipase A2 and lysophospholipase activities in the presence of phosphoinositides. Has O-acyltransferase activity. Catalyzes the transfer of fatty acyl chains from phospholipids to a primary hydroxyl group of glycerol (sn-1 or sn-3), potentially contributing to monoacylglycerol synthesis. The chain is Cytosolic phospholipase A2 (Pla2g4a) from Rattus norvegicus (Rat).